A 273-amino-acid chain; its full sequence is Transmembrane protein 45A (273 aa).

Helical transmembrane passes span 8-27 (ALPG…KNIL), 55-79 (VVVL…ALIL), 108-131 (IICF…AIFV), 153-171 (LLVF…EFLV), and 217-236 (MFLS…LIGV).

Belongs to the TMEM45 family.

It localises to the membrane. The protein is Transmembrane protein 45A (Tmem45a) of Mus musculus (Mouse).